The following is a 3843-amino-acid chain: NBPF family member NBPF19 (3843 aa).

Positions 70-130 form a coiled coil; sequence MLRNERQFKE…RSLNEHLQAL (61 aa). Olduvai domains lie at 165-257, 258-329, 330-421, 424-479, 480-572, 573-665, 668-723, 724-816, 817-909, 912-967, 968-1060, 1061-1153, 1156-1211, 1212-1304, 1305-1397, 1400-1455, 1456-1548, 1549-1641, 1644-1699, 1700-1792, 1793-1885, 1888-1943, 1944-2036, 2037-2129, 2132-2187, 2188-2280, 2281-2373, 2376-2431, 2432-2524, 2525-2617, 2620-2675, 2676-2768, 2769-2861, 2864-2919, 2920-3012, 3013-3105, 3108-3163, 3164-3256, 3257-3349, 3352-3407, 3408-3500, 3501-3593, 3596-3651, 3652-3744, and 3745-3843; these read ENDN…HIIP, ENES…VDIG, RHRW…PSCP, SREL…LDVD, RIKK…RSKK, ERRR…PSCP, and ERRR…IFPQ. Disordered stretches follow at residues 180–203 and 249–295; these read EKVQ…PEDS and WEDA…EGYS. 2 stretches are compositionally biased toward acidic residues: residues 259–268 and 279–291; these read NESDDEEEEE and ESEE…ESWD. The disordered stretch occupies residues 559 to 597; the sequence is KGKGKKRRGRRSKKERRRGRKEGEEDQNPPCPRLSRELL. Residues 560 to 578 show a composition bias toward basic residues; it reads GKGKKRRGRRSKKERRRGR. The disordered stretch occupies residues 803–841; sequence KGKGKKRRGRRSKKERRRGRKEGEEDQNPPCPRLSRELL. A compositionally biased stretch (basic residues) spans 804 to 822; that stretch reads GKGKKRRGRRSKKERRRGR. Residues 1047–1085 are disordered; it reads KGKGKKRRGRRSKKERRRGRKEGEEDQNPPCPRLSRELL. Positions 1048-1066 are enriched in basic residues; that stretch reads GKGKKRRGRRSKKERRRGR. Residues 1291–1329 are disordered; it reads KGKGKKRRGRRSKKERRRGRKEGEEDQNPPCPRLSRELL. Residues 1292 to 1310 show a composition bias toward basic residues; the sequence is GKGKKRRGRRSKKERRRGR. The disordered stretch occupies residues 1535–1573; it reads KGKGKKRRGRRSKKERRRGRKEGEEDQNPPCPRLSRELL. Residues 1536-1554 are compositionally biased toward basic residues; sequence GKGKKRRGRRSKKERRRGR. Residues 1779–1817 form a disordered region; sequence KGKGKKRRGRRSKKERRRGRKEGEEDQNPPCPRLSRELL. Residues 1780 to 1798 are compositionally biased toward basic residues; it reads GKGKKRRGRRSKKERRRGR. A disordered region spans residues 2023-2061; sequence KGKGKKRRGRRSKKERRRGRKEGEEDQNPPCPRLSRELL. The segment covering 2024–2042 has biased composition (basic residues); that stretch reads GKGKKRRGRRSKKERRRGR. The disordered stretch occupies residues 2267 to 2305; that stretch reads KGKGKKRRGRRSKKERRRGRKEGEEDQNPPCPRLSRELL. The span at 2268–2286 shows a compositional bias: basic residues; it reads GKGKKRRGRRSKKERRRGR. The tract at residues 2511–2549 is disordered; that stretch reads KGKGKKRRGRRSKKERRRGRKEGEEDQNPPCPRLSRELL. The span at 2512–2530 shows a compositional bias: basic residues; the sequence is GKGKKRRGRRSKKERRRGR. A disordered region spans residues 2755–2793; it reads KGKGKKRRGRRSKKERRRGRKEGEEDQNPPCPRLSRELL. The span at 2756–2774 shows a compositional bias: basic residues; the sequence is GKGKKRRGRRSKKERRRGR. Positions 2999-3037 are disordered; that stretch reads KGKGKKRRGRRSKKERRRGRKEGEEDQNPPCPRLSRELL. Residues 3000-3018 show a composition bias toward basic residues; that stretch reads GKGKKRRGRRSKKERRRGR. The segment at 3243–3281 is disordered; that stretch reads KGKGKKRRGRRSKKERRRGRKEGEEDQNPPCPRLSRELL. A compositionally biased stretch (basic residues) spans 3244-3262; sequence GKGKKRRGRRSKKERRRGR. The disordered stretch occupies residues 3487–3525; it reads KGKGKKRRGRRSKKERRRGRKEGEEDQNPPCPRLSRELL. Residues 3488–3506 show a composition bias toward basic residues; sequence GKGKKRRGRRSKKERRRGR. Positions 3731 to 3764 are disordered; sequence KGKGKKRRGRRSKKERRRGRKEGEEDQNPPCPRL. A compositionally biased stretch (basic residues) spans 3732 to 3750; that stretch reads GKGKKRRGRRSKKERRRGR.

Belongs to the NBPF family.

The protein resides in the cytoplasm. This chain is NBPF family member NBPF19, found in Homo sapiens (Human).